Here is a 133-residue protein sequence, read N- to C-terminus: Salivary cystatin-L (133 aa).

An N-terminal signal peptide occupies residues 1–19; sequence MTSTFALVLLLGGMAVCVA. Residues 30-118 form the Cystatin domain; it reads ANHQANPEFL…RTCTTVVFEN (89 aa). Cystine bridges form between C89–C100 and C111–C130.

Belongs to the cystatin family. In terms of assembly, monomer. Can form homodimers in vitro, but probably not in vivo. Homodimers are predicted to be inactive; dimerization disrupts the interaction with target proteases. Detected in saliva (at protein level). Detected in salivary gland and midgut.

Its subcellular location is the secreted. Its function is as follows. Contributes to the suppression of the host's immune response to tick salivary proteins and is important for successful feeding on hosts. Inhibitor of cysteine proteinases. Inhibits host papain and cathepsin L (CTSL) (in vitro). Inhibits host cathepsin S (CTSS) (in vitro). Inhibits host CTSV and CTSC, but to a lesser degree (in vitro). Inhibits host immune responses via its inhibition of host cathepsins. Inhibits differentiation of host dendritic cells. Inhibits proliferation of host T-cells in response to antigen stimulus. Down-regulates IL1B production by host mast cells, and this then leads to impaired activation of IL1R1, resulting in decreased IL9 production. Inhibits host inflammatory reactions and recruitment of host neutrophils. Attenuates IFN-beta (IFNB1)-triggered JAK/STAT signaling pathway in mouse dendritic cells. (Microbial infection) Down-regulates TLR2-mediated host responses to infection by Borrelia burgdorferi and the production of the chemokine CCL3 by host dendritic cells. Down-regulates host responses to infection by B.burgdorferi and the production of IFNB1 by host dendritic cells. The polypeptide is Salivary cystatin-L (Ixodes scapularis (Black-legged tick)).